The primary structure comprises 102 residues: ATP-dependent Clp protease adapter protein ClpS (102 aa).

It belongs to the ClpS family. As to quaternary structure, binds to the N-terminal domain of the chaperone ClpA.

Involved in the modulation of the specificity of the ClpAP-mediated ATP-dependent protein degradation. The protein is ATP-dependent Clp protease adapter protein ClpS of Janthinobacterium sp. (strain Marseille) (Minibacterium massiliensis).